We begin with the raw amino-acid sequence, 278 residues long: NAD kinase (278 aa).

D56 serves as the catalytic Proton acceptor. Residues D56 to G57, N132 to E133, R158, D160, and T171 to S176 each bind NAD(+).

Belongs to the NAD kinase family. It depends on a divalent metal cation as a cofactor.

Its subcellular location is the cytoplasm. The enzyme catalyses NAD(+) + ATP = ADP + NADP(+) + H(+). In terms of biological role, involved in the regulation of the intracellular balance of NAD and NADP, and is a key enzyme in the biosynthesis of NADP. Catalyzes specifically the phosphorylation on 2'-hydroxyl of the adenosine moiety of NAD to yield NADP. This Streptococcus agalactiae serotype V (strain ATCC BAA-611 / 2603 V/R) protein is NAD kinase.